The primary structure comprises 467 residues: Ethanolamine-phosphate phospho-lyase homolog 1 (467 aa).

Lys307 carries the post-translational modification N6-(pyridoxal phosphate)lysine.

This sequence belongs to the class-III pyridoxal-phosphate-dependent aminotransferase family. Requires pyridoxal 5'-phosphate as cofactor.

This is Ethanolamine-phosphate phospho-lyase homolog 1 from Caenorhabditis elegans.